The sequence spans 355 residues: Agamous-like MADS-box protein AGL81 (355 aa).

Residues 1–22 are disordered; it reads MAIRSLPSSSRCSSSSSSSSYS. The MADS-box domain maps to 26-68; it reads TSLSNRLETIFKKASELCTLCDIEACVIYYGPDGELKTWPPER. Residues 162 to 174 are compositionally biased toward basic and acidic residues; that stretch reads VESQKHKETKPDH. Residues 162–186 are disordered; sequence VESQKHKETKPDHQSLASSSLNHQT. The span at 176–186 shows a compositional bias: polar residues; the sequence is SLASSSLNHQT.

As to quaternary structure, interacts with MEE14/CBP1.

The protein localises to the nucleus. Functionally, probable transcription factor that may function in the maintenance of the proper function of the central cell in pollen tube attraction. The chain is Agamous-like MADS-box protein AGL81 from Arabidopsis thaliana (Mouse-ear cress).